The sequence spans 157 residues: Protein Smg homolog (157 aa).

Belongs to the Smg family.

The sequence is that of Protein Smg homolog from Colwellia psychrerythraea (strain 34H / ATCC BAA-681) (Vibrio psychroerythus).